We begin with the raw amino-acid sequence, 232 residues long: Flavin-dependent thymidylate synthase (232 aa).

In terms of domain architecture, ThyX spans 1–204 (MKIALLQHTP…PTIFRDAGPG (204 aa)). Residues Ser-55, 79 to 81 (RHR), and Gln-87 each bind FAD. DUMP contacts are provided by residues 76-79 (QLVR), 87-91 (QQSQR), and Arg-143. The ThyX motif motif lies at 79–89 (RHRIASYSQQS). FAD is bound by residues 159 to 161 (NAR) and His-165. Arg-170 contributes to the dUMP binding site. Arg-170 acts as the Involved in ionization of N3 of dUMP, leading to its activation in catalysis.

The protein belongs to the thymidylate synthase ThyX family. Homotetramer. Requires FAD as cofactor.

It catalyses the reaction dUMP + (6R)-5,10-methylene-5,6,7,8-tetrahydrofolate + NADPH + H(+) = dTMP + (6S)-5,6,7,8-tetrahydrofolate + NADP(+). The protein operates within pyrimidine metabolism; dTTP biosynthesis. In terms of biological role, catalyzes the reductive methylation of 2'-deoxyuridine-5'-monophosphate (dUMP) to 2'-deoxythymidine-5'-monophosphate (dTMP) while utilizing 5,10-methylenetetrahydrofolate (mTHF) as the methyl donor, and NADPH and FADH(2) as the reductant. This Geobacter sulfurreducens (strain ATCC 51573 / DSM 12127 / PCA) protein is Flavin-dependent thymidylate synthase.